Consider the following 387-residue polypeptide: Alpha-sarcoglycan (387 aa).

The first 24 residues, 1-24, serve as a signal peptide directing secretion; the sequence is MAAAALLWLPLLVGCLAGPGGTEA. Residues 25–290 lie on the Extracellular side of the membrane; sequence QQTTLYPLVG…ATARDFLADA (266 aa). N-linked (GlcNAc...) asparagine glycans are attached at residues N174 and N246. A helical membrane pass occupies residues 291-311; that stretch reads LVTLLVPLLVALLLALLLAYI. The Cytoplasmic portion of the chain corresponds to 312–387; the sequence is MCCRREGRLK…AQVPLILDQH (76 aa). Position 377 is a phosphoserine (S377).

Belongs to the sarcoglycan alpha/epsilon family. In terms of assembly, cross-link to form 2 major subcomplexes: one consisting of SGCB, SGCD and SGCG and the other consisting of SGCB and SGCD. The association between SGCB and SGCG is particularly strong while SGCA is loosely associated with the other sarcoglycans. Interacts with the syntrophin SNTA1.

Its subcellular location is the cell membrane. It localises to the sarcolemma. It is found in the cytoplasm. The protein resides in the cytoskeleton. Its function is as follows. Component of the sarcoglycan complex, a subcomplex of the dystrophin-glycoprotein complex which forms a link between the F-actin cytoskeleton and the extracellular matrix. This Oryctolagus cuniculus (Rabbit) protein is Alpha-sarcoglycan (SGCA).